The following is a 140-amino-acid chain: ATP synthase epsilon chain (140 aa).

The protein belongs to the ATPase epsilon chain family. As to quaternary structure, F-type ATPases have 2 components, CF(1) - the catalytic core - and CF(0) - the membrane proton channel. CF(1) has five subunits: alpha(3), beta(3), gamma(1), delta(1), epsilon(1). CF(0) has three main subunits: a, b and c.

It is found in the cell inner membrane. Functionally, produces ATP from ADP in the presence of a proton gradient across the membrane. The chain is ATP synthase epsilon chain from Stenotrophomonas maltophilia (strain R551-3).